Consider the following 409-residue polypeptide: Putative fatty acyl-CoA reductase 7 (409 aa).

The protein belongs to the fatty acyl-CoA reductase family.

This is Putative fatty acyl-CoA reductase 7 (FAR7) from Arabidopsis thaliana (Mouse-ear cress).